Reading from the N-terminus, the 282-residue chain is HTH-type transcriptional activator RhaR (282 aa).

The HTH araC/xylS-type domain maps to 179–277; that stretch reads DKLITRLAAS…GMTPSQWRHL (99 aa). 2 DNA-binding regions (H-T-H motif) span residues 196–217 and 244–267; these read DKFCDEASCSERVLRQQFRQQT and ISDISTECGFEDSNYFSVVFTRET.

In terms of assembly, binds DNA as a dimer.

It localises to the cytoplasm. Its function is as follows. Activates expression of the rhaSR operon in response to L-rhamnose. The protein is HTH-type transcriptional activator RhaR of Escherichia coli (strain K12 / MC4100 / BW2952).